Consider the following 228-residue polypeptide: MTVQIITIDGPSGSGKGTLAAKLAAYYQFHLLDSGALYRLLGLSLHKHDLLEKLDSHLDECVNYARQLNIKFETSAEGTLVFLDGEDVTQTIRTERVGEYASKVAAIPELRQALFERQRAFAQTPGLVADGRDMATSIFPEANAKIYLTASAESRAERRVKQLQGMGLDAKINDILANIQARDKRDMEREVAPLKPAADAYIIDSSELTIDQVFKLMVDYVNSRTVSN.

10-18 is a binding site for ATP; sequence GPSGSGKGT.

This sequence belongs to the cytidylate kinase family. Type 1 subfamily.

Its subcellular location is the cytoplasm. It carries out the reaction CMP + ATP = CDP + ADP. It catalyses the reaction dCMP + ATP = dCDP + ADP. The polypeptide is Cytidylate kinase (Acinetobacter baumannii (strain ACICU)).